Reading from the N-terminus, the 115-residue chain is UPF0102 protein Swol_1475 (115 aa).

It belongs to the UPF0102 family.

The polypeptide is UPF0102 protein Swol_1475 (Syntrophomonas wolfei subsp. wolfei (strain DSM 2245B / Goettingen)).